The sequence spans 526 residues: Flavonoid 3'-monooxygenase CYP75B3 (526 aa).

A helical transmembrane segment spans residues 6-26; it reads LPLLLGSLAVSAAVWYLVYFL. A heme-binding site is contributed by Cys-461.

It belongs to the cytochrome P450 family. Heme is required as a cofactor.

It localises to the membrane. It carries out the reaction a 3'-unsubstituted flavone + reduced [NADPH--hemoprotein reductase] + O2 = a 3'-hydroxyflavone + oxidized [NADPH--hemoprotein reductase] + H2O + H(+). Its pathway is secondary metabolite biosynthesis; flavonoid biosynthesis. Its function is as follows. Catalyzes the 3'-hydroxylation of the flavonoid B-ring to the 3',4'-hydroxylated state. Catalyzes the 3'-hydroxylation of apigenin to generate luteolin. The sequence is that of Flavonoid 3'-monooxygenase CYP75B3 from Oryza sativa subsp. japonica (Rice).